The chain runs to 229 residues: Clathrin light chain B (229 aa).

2 stretches are compositionally biased toward low complexity: residues 1–17 (MAED…GAPE) and 45–58 (GAPA…AQPG). A disordered region spans residues 1-80 (MAEDFGFFSS…TVNGDVFQEA (80 aa)). Phosphoserine occurs at positions 11 and 13. Residues 93 to 155 (ADRLTQEPES…QVEKNKINNR (63 aa)) are involved in binding clathrin heavy chain. The residue at position 187 (Thr-187) is a Phosphothreonine. Cys-199 and Cys-209 are oxidised to a cystine. Lys-204 carries the post-translational modification N6-acetyllysine. At Ser-217 the chain carries Phosphoserine.

This sequence belongs to the clathrin light chain family. In terms of assembly, clathrin coats are formed from molecules containing 3 heavy chains and 3 light chains. Interacts (via N-terminus) with HIP1. Interacts with HIP1R.

The protein resides in the cytoplasmic vesicle membrane. The protein localises to the membrane. It localises to the coated pit. In terms of biological role, clathrin is the major protein of the polyhedral coat of coated pits and vesicles. The protein is Clathrin light chain B (Cltb) of Rattus norvegicus (Rat).